Consider the following 175-residue polypeptide: T-cell surface glycoprotein CD3 epsilon chain (175 aa).

Positions 1–21 (MRCEVPLPLLGLLLCVVGAAA) are cleaved as a signal peptide. Residues 22 to 100 (QGGQEEFAVE…VCANCEELDT (79 aa)) are Extracellular-facing. The helical transmembrane segment at 101–121 (FTVVGIIAADLLITLGVLILV) threads the bilayer. The Cytoplasmic segment spans residues 122 to 175 (YYFSKNKKGQSRAAAGSRPRAQKMRRPPPVPNPDYEPIRKGQRDVYAGLEHRGF). Residues 133–163 (RAAAGSRPRAQKMRRPPPVPNPDYEPIRKGQ) form a disordered region. The ITAM domain maps to 146–173 (RRPPPVPNPDYEPIRKGQRDVYAGLEHR).

As to quaternary structure, the TCR/CD3 complex of T-lymphocytes consists of either a TCR alpha/beta or TCR gamma/delta heterodimer coexpressed at the cell surface with the invariant subunits of CD3 labeled gamma, delta, epsilon, zeta, and eta.

The protein resides in the cell membrane. Its function is as follows. The CD3 complex mediates signal transduction, resulting in T-cell activation and proliferation. Required for normal immune responses. The chain is T-cell surface glycoprotein CD3 epsilon chain (CD3E) from Gallus gallus (Chicken).